A 499-amino-acid polypeptide reads, in one-letter code: Maturase K (499 aa).

The protein belongs to the intron maturase 2 family. MatK subfamily.

The protein resides in the plastid. It localises to the chloroplast. In terms of biological role, usually encoded in the trnK tRNA gene intron. Probably assists in splicing its own and other chloroplast group II introns. The chain is Maturase K from Gymnocladus chinensis (Soap tree).